The sequence spans 315 residues: Methionyl-tRNA formyltransferase (315 aa).

113–116 (SLLP) is a binding site for (6S)-5,6,7,8-tetrahydrofolate.

The protein belongs to the Fmt family.

It carries out the reaction L-methionyl-tRNA(fMet) + (6R)-10-formyltetrahydrofolate = N-formyl-L-methionyl-tRNA(fMet) + (6S)-5,6,7,8-tetrahydrofolate + H(+). Attaches a formyl group to the free amino group of methionyl-tRNA(fMet). The formyl group appears to play a dual role in the initiator identity of N-formylmethionyl-tRNA by promoting its recognition by IF2 and preventing the misappropriation of this tRNA by the elongation apparatus. In Edwardsiella ictaluri (strain 93-146), this protein is Methionyl-tRNA formyltransferase.